The chain runs to 140 residues: Large ribosomal subunit protein uL13 (140 aa).

This sequence belongs to the universal ribosomal protein uL13 family. In terms of assembly, part of the 50S ribosomal subunit.

This protein is one of the early assembly proteins of the 50S ribosomal subunit, although it is not seen to bind rRNA by itself. It is important during the early stages of 50S assembly. The chain is Large ribosomal subunit protein uL13 from Sulfurimonas denitrificans (strain ATCC 33889 / DSM 1251) (Thiomicrospira denitrificans (strain ATCC 33889 / DSM 1251)).